A 145-amino-acid chain; its full sequence is Meiotically up-regulated gene 124 protein (145 aa).

A run of 2 helical transmembrane segments spans residues 18–38 (IILT…CPSI) and 95–115 (FAWS…NFFL).

It is found in the membrane. In terms of biological role, has a role in meiosis. This Schizosaccharomyces pombe (strain 972 / ATCC 24843) (Fission yeast) protein is Meiotically up-regulated gene 124 protein (mug124).